Consider the following 836-residue polypeptide: Glutamate receptor ionotropic, kainate 1 (836 aa).

The N-terminal stretch at 1–30 (MERGTVLIQPGLWTRDTSWTLLYFLCYILP) is a signal peptide. The Extracellular segment spans residues 31–561 (QTSPQVLRIG…VFSFLNPLSP (531 aa)). Asparagine 68, asparagine 74, asparagine 276, asparagine 379, asparagine 413, asparagine 424, and asparagine 431 each carry an N-linked (GlcNAc...) asparagine glycan. L-glutamate-binding residues include proline 516, threonine 518, and arginine 523. Asparagine 546 carries an N-linked (GlcNAc...) asparagine glycan. A helical membrane pass occupies residues 562-582 (DIWMYVLLACLGVSCVLFVIA). Residues 583–638 (RFTPYEWYNPHPCNPDSDVVENNFTLLNSFWFGVGALMQQGSELMPKALSTRIVGG) are Cytoplasmic-facing. A helical transmembrane segment spans residues 639-659 (IWWFFTLIIISSYTANLAAFL). Residues 660–721 (TVERMESPID…RQPSALGVEN (62 aa)) lie on the Extracellular side of the membrane. L-glutamate is bound by residues serine 689 and threonine 690. Residues 722-742 (IGGIFIVLAAGLVLSVFVAIG) traverse the membrane as a helical segment. The Cytoplasmic portion of the chain corresponds to 743 to 836 (EFIYKSRKNN…RRTQRKETVA (94 aa)).

It belongs to the glutamate-gated ion channel (TC 1.A.10.1) family. GRIK1 subfamily. As to quaternary structure, homotetramer or heterotetramer of pore-forming glutamate receptor subunits. Tetramers may be formed by the dimerization of dimers. Can form functional heteromeric receptors with GRIK4 and GRIK5. Interacts with KLHL17. In terms of tissue distribution, most abundant in the cerebellum. Also present in the suprachiasmatic nuclei of the hypothalamus.

The protein localises to the cell membrane. Its subcellular location is the postsynaptic cell membrane. The catalysed reaction is Ca(2+)(in) = Ca(2+)(out). Functionally, ionotropic glutamate receptor that functions as a cation-permeable ligand-gated ion channel, gated by L-glutamate and the glutamatergic agonist kainic acid. L-glutamate acts as an excitatory neurotransmitter at many synapses in the central nervous system. Binding of the excitatory neurotransmitter L-glutamate induces a conformation change, leading to the opening of the cation channel, and thereby converts the chemical signal to an electrical impulse. The receptor then desensitizes rapidly and enters a transient inactive state, characterized by the presence of bound agonist. This chain is Glutamate receptor ionotropic, kainate 1 (Grik1), found in Mus musculus (Mouse).